An 846-amino-acid chain; its full sequence is Sucrose synthase 6 (846 aa).

Positions cysteine 276–threonine 755 are GT-B glycosyltransferase.

Belongs to the glycosyltransferase 1 family. Plant sucrose synthase subfamily.

It catalyses the reaction an NDP-alpha-D-glucose + D-fructose = a ribonucleoside 5'-diphosphate + sucrose + H(+). In terms of biological role, sucrose-cleaving enzyme that provides UDP-glucose and fructose for various metabolic pathways. This Oryza sativa subsp. japonica (Rice) protein is Sucrose synthase 6 (SUS6).